We begin with the raw amino-acid sequence, 735 residues long: 1,4-alpha-glucan branching enzyme GlgB 1 (735 aa).

Aspartate 418 acts as the Nucleophile in catalysis. Glutamate 471 serves as the catalytic Proton donor.

The protein belongs to the glycosyl hydrolase 13 family. GlgB subfamily. As to quaternary structure, monomer.

The catalysed reaction is Transfers a segment of a (1-&gt;4)-alpha-D-glucan chain to a primary hydroxy group in a similar glucan chain.. Its pathway is glycan biosynthesis; glycogen biosynthesis. Its function is as follows. Catalyzes the formation of the alpha-1,6-glucosidic linkages in glycogen by scission of a 1,4-alpha-linked oligosaccharide from growing alpha-1,4-glucan chains and the subsequent attachment of the oligosaccharide to the alpha-1,6 position. This is 1,4-alpha-glucan branching enzyme GlgB 1 from Rhizobium etli (strain ATCC 51251 / DSM 11541 / JCM 21823 / NBRC 15573 / CFN 42).